The chain runs to 173 residues: NADH-ubiquinone oxidoreductase chain 6 (173 aa).

Transmembrane regions (helical) follow at residues 1-21 (MTYFVVFLGLCFVLGGLAVAS), 27-47 (YGVVGLVLASVAGCGWLLSLG), 48-68 (VSFVSLVLFMVYLGGMLVVFV), 87-107 (VVGYGMSFIVVLVVGVVVGGF), 113-133 (FGVVTVDSAGVFFARLDFSGV), and 139-159 (CGVGMFLVAGWGLLLTLFVVL).

It belongs to the complex I subunit 6 family.

It is found in the mitochondrion membrane. It catalyses the reaction a ubiquinone + NADH + 5 H(+)(in) = a ubiquinol + NAD(+) + 4 H(+)(out). Core subunit of the mitochondrial membrane respiratory chain NADH dehydrogenase (Complex I) that is believed to belong to the minimal assembly required for catalysis. Complex I functions in the transfer of electrons from NADH to the respiratory chain. The immediate electron acceptor for the enzyme is believed to be ubiquinone. This Cepphus grylle (Black guillemot) protein is NADH-ubiquinone oxidoreductase chain 6 (MT-ND6).